The chain runs to 313 residues: PDCD10 and GCKIII kinases-associated protein 1 (313 aa).

The interval 42 to 95 (KGTQNSEVEVPGSTLHSGSLSKPDSSGSTTGLPCQGSLTQEDSEERPCVEKHGI) is disordered. A compositionally biased stretch (low complexity) spans 58-69 (SGSLSKPDSSGS). Ser-60 carries the post-translational modification Phosphoserine. Residues 70–81 (TTGLPCQGSLTQ) show a composition bias toward polar residues. Phosphothreonine is present on Thr-104. Residues Ser-107, Ser-237, and Ser-240 each carry the phosphoserine modification. The disordered stretch occupies residues 253–288 (YFKEEDPTQPTPVADPGNEREDPHTYNGNKEGAVVD).

As to quaternary structure, interacts with KEAP1; this interaction prevents the ubiquitination of KEAP1 by TRIM25, thus protecting KEAP1 from degradation. Found in association with PDCD10 and members of the STE20 kinases, such as STK24, STK25, and STK26.

Its subcellular location is the cell membrane. Functionally, acts as a tumor suppressor. Acts as a tumor suppressor for colorectal cancer cell proliferation by targeting KEAP1/USP17/ELK1/CDK6 axis. The chain is PDCD10 and GCKIII kinases-associated protein 1 from Rattus norvegicus (Rat).